The sequence spans 301 residues: Probable 5-dehydro-4-deoxyglucarate dehydratase (301 aa).

Belongs to the DapA family.

The catalysed reaction is 5-dehydro-4-deoxy-D-glucarate + H(+) = 2,5-dioxopentanoate + CO2 + H2O. It participates in carbohydrate acid metabolism; D-glucarate degradation; 2,5-dioxopentanoate from D-glucarate: step 2/2. The chain is Probable 5-dehydro-4-deoxyglucarate dehydratase from Allorhizobium ampelinum (strain ATCC BAA-846 / DSM 112012 / S4) (Agrobacterium vitis (strain S4)).